The chain runs to 483 residues: Probable ATP-dependent RNA helicase DDX49 (483 aa).

Positions 2–30 match the Q motif motif; that stretch reads AGFAELGLSSWLVEQCRQLGLKQPTPVQL. The region spanning 33 to 207 is the Helicase ATP-binding domain; it reads IPAILEGRDC…GLATNQPFFW (175 aa). Position 46–53 (46–53) interacts with ATP; sequence AKTGSGKT. A DEAD box motif is present at residues 152-155; the sequence is DEAD. Residues 218 to 382 form the Helicase C-terminal domain; that stretch reads QLDQRYLLVP…EFSVEEAEVL (165 aa). Positions 444–483 are disordered; sequence KEKVEETLKRQKAGRAGHKGRPPRTPSGSHSGPVPSQGLV. A compositionally biased stretch (basic residues) spans 453-465; that stretch reads RQKAGRAGHKGRP.

Belongs to the DEAD box helicase family. DDX49/DBP8 subfamily.

The protein resides in the nucleus. It localises to the nucleolus. It catalyses the reaction ATP + H2O = ADP + phosphate + H(+). In terms of biological role, ATP-dependent RNA helicase that plays a role in various aspects of RNA metabolism including the regulation of mRNA export and the levels of pre-ribosomal RNA. Regulates the stability and synthesis of pre-ribosomal RNA and thereby regulates cell proliferation. Also possesses antiviral activity by recognizing gammaherpesvirus transcripts in the context of lytic reactivation. In Homo sapiens (Human), this protein is Probable ATP-dependent RNA helicase DDX49 (DDX49).